A 1169-amino-acid chain; its full sequence is RecBCD enzyme subunit RecB (1169 aa).

Residues Met1–Ser436 form the UvrD-like helicase ATP-binding domain. Residues Met1–Ile839 form a DNA-binding and helicase activity, interacts with RecC region. Ala18–Thr25 lines the ATP pocket. One can recognise a UvrD-like helicase C-terminal domain in the interval Ile459–Gly746. The interval Lys883–Leu1169 is nuclease activity, interacts with RecD and RecA. Mg(2+)-binding residues include His939, Asp1052, and Asp1065. Asp1065 acts as the For nuclease activity in catalysis.

It belongs to the helicase family. UvrD subfamily. In terms of assembly, heterotrimer of RecB, RecC and RecD. All subunits contribute to DNA-binding. Interacts with RecA. Mg(2+) serves as cofactor.

The enzyme catalyses Exonucleolytic cleavage (in the presence of ATP) in either 5'- to 3'- or 3'- to 5'-direction to yield 5'-phosphooligonucleotides.. It catalyses the reaction Couples ATP hydrolysis with the unwinding of duplex DNA by translocating in the 3'-5' direction.. It carries out the reaction ATP + H2O = ADP + phosphate + H(+). Functionally, a helicase/nuclease that prepares dsDNA breaks (DSB) for recombinational DNA repair. Binds to DSBs and unwinds DNA via a highly rapid and processive ATP-dependent bidirectional helicase activity. Unwinds dsDNA until it encounters a Chi (crossover hotspot instigator) sequence from the 3' direction. Cuts ssDNA a few nucleotides 3' to the Chi site. The properties and activities of the enzyme are changed at Chi. The Chi-altered holoenzyme produces a long 3'-ssDNA overhang and facilitates RecA-binding to the ssDNA for homologous DNA recombination and repair. Holoenzyme degrades any linearized DNA that is unable to undergo homologous recombination. In the holoenzyme this subunit contributes ATPase, 3'-5' helicase, exonuclease activity and loads RecA onto ssDNA. The chain is RecBCD enzyme subunit RecB from Borreliella burgdorferi (strain ATCC 35210 / DSM 4680 / CIP 102532 / B31) (Borrelia burgdorferi).